The chain runs to 114 residues: Cytochrome b-c1 complex subunit 1, mitochondrial (114 aa).

An N6-acetyllysine modification is found at lysine 31.

The protein belongs to the peptidase M16 family. UQCRC1/QCR1 subfamily. Component of the ubiquinol-cytochrome c oxidoreductase (cytochrome b-c1 complex, complex III, CIII), a multisubunit enzyme composed of 11 subunits. The complex is composed of 3 respiratory subunits cytochrome b, cytochrome c1 and Rieske protein UQCRFS1, 2 core protein subunits UQCRC1/QCR1 and UQCRC2/QCR2, and 6 low-molecular weight protein subunits UQCRH/QCR6, UQCRB/QCR7, UQCRQ/QCR8, UQCR10/QCR9, UQCR11/QCR10 and subunit 9, the cleavage product of Rieske protein UQCRFS1. The complex exists as an obligatory dimer and forms supercomplexes (SCs) in the inner mitochondrial membrane with NADH-ubiquinone oxidoreductase (complex I, CI) and cytochrome c oxidase (complex IV, CIV), resulting in different assemblies (supercomplex SCI(1)III(2)IV(1) and megacomplex MCI(2)III(2)IV(2)). Interacts with UQCC6. Interacts with STMP1.

It localises to the mitochondrion inner membrane. Its function is as follows. Component of the ubiquinol-cytochrome c oxidoreductase, a multisubunit transmembrane complex that is part of the mitochondrial electron transport chain which drives oxidative phosphorylation. The respiratory chain contains 3 multisubunit complexes succinate dehydrogenase (complex II, CII), ubiquinol-cytochrome c oxidoreductase (cytochrome b-c1 complex, complex III, CIII) and cytochrome c oxidase (complex IV, CIV), that cooperate to transfer electrons derived from NADH and succinate to molecular oxygen, creating an electrochemical gradient over the inner membrane that drives transmembrane transport and the ATP synthase. The cytochrome b-c1 complex catalyzes electron transfer from ubiquinol to cytochrome c, linking this redox reaction to translocation of protons across the mitochondrial inner membrane, with protons being carried across the membrane as hydrogens on the quinol. In the process called Q cycle, 2 protons are consumed from the matrix, 4 protons are released into the intermembrane space and 2 electrons are passed to cytochrome c. The 2 core subunits UQCRC1/QCR1 and UQCRC2/QCR2 are homologous to the 2 mitochondrial-processing peptidase (MPP) subunits beta-MPP and alpha-MPP respectively, and they seem to have preserved their MPP processing properties. May be involved in the in situ processing of UQCRFS1 into the mature Rieske protein and its mitochondrial targeting sequence (MTS)/subunit 9 when incorporated into complex III. Seems to play an important role in the maintenance of proper mitochondrial function in nigral dopaminergic neurons. The polypeptide is Cytochrome b-c1 complex subunit 1, mitochondrial (Mesocricetus auratus (Golden hamster)).